Reading from the N-terminus, the 455-residue chain is Glycylpeptide N-tetradecanoyltransferase (455 aa).

38–41 (HKFW) contacts tetradecanoyl-CoA. Positions 168–204 (INFLCVHKQLRSKRLTPVLIKEITRRVNKCDIWHALY) are myristoyl CoA-binding. Residue Leu455 is the Proton acceptor; via carboxylate of the active site.

The protein belongs to the NMT family. Monomer. The N-terminus is blocked.

It localises to the cytoplasm. It carries out the reaction N-terminal glycyl-[protein] + tetradecanoyl-CoA = N-tetradecanoylglycyl-[protein] + CoA + H(+). Inhibited by diethylpyrocarbonate. Competitively inhibited by S-(2-oxo)pentadecyl-CoA, a non hydrolysable myristoyl-CoA analog, and by SC-58272, a peptidomimetic derived from the N-terminal sequence of a natural substrate. Adds a myristoyl group to the N-terminal glycine residue of certain cellular proteins. Substrate specificity requires an N-terminal glycine in the nascent polypeptide substrates. Uncharged amino acids are preferred at position 2 while neutral residues are favored at positions 3 and 4. Ser is present at position 5 in almost all known N-myristoyl proteins and Lys is commonly encountered at postion 6. The chain is Glycylpeptide N-tetradecanoyltransferase (NMT1) from Saccharomyces cerevisiae (strain ATCC 204508 / S288c) (Baker's yeast).